The sequence spans 390 residues: Elongation factor Ts, mitochondrial (390 aa).

This sequence belongs to the EF-Ts family.

The protein resides in the mitochondrion. Its function is as follows. Associates with the EF-Tu.GDP complex and induces the exchange of GDP to GTP. It remains bound to the aminoacyl-tRNA.EF-Tu.GTP complex up to the GTP hydrolysis stage on the ribosome. The sequence is that of Elongation factor Ts, mitochondrial from Plasmodium falciparum (isolate 3D7).